The following is a 322-amino-acid chain: MSSNKLPTSKYDLSTYWGRVRHAMDITDPRTLLSTSQDLNSAVKTLEDYGAGKIAQLDETVWHAKKIVDSTLHPDTKEPVFLPFRMSCFVLTNLVVTAGMLQPNLGTAGTVFWQWMNQSVNVAFNSANANKSTQLTLPQMTKSYIYAVSASCGVAIGLNKIVPRMNFLSSSSKAVLGRLTPFAAVASAGVLNVFLMRGEELRQGIDVFDKEGESLGKSKKAAFYAVGETALSRVINASPIMVIPPLVLMRLQKQNWLRTRPKLTIPVNLGLITLTSLIALPLAIGVFPAREKISPFKLEPQFHHLKDKSDQPIVEVEFNRGL.

Helical transmembrane passes span 143–163, 175–195, 229–249, and 269–289; these read SYIY…KIVP, VLGR…NVFL, TALS…LVLM, and LGLI…VFPA.

Belongs to the sideroflexin family.

It is found in the mitochondrion membrane. Its function is as follows. Mitochondrial amino-acid transporter that mediates transport of serine into mitochondria. In Schizosaccharomyces pombe (strain 972 / ATCC 24843) (Fission yeast), this protein is Sideroflexin fsf1.